Consider the following 211-residue polypeptide: FMN-dependent NADH:quinone oxidoreductase 2 (211 aa).

102–105 is an FMN binding site; sequence MWNF.

It belongs to the azoreductase type 1 family. As to quaternary structure, homodimer. FMN serves as cofactor.

It catalyses the reaction 2 a quinone + NADH + H(+) = 2 a 1,4-benzosemiquinone + NAD(+). It carries out the reaction N,N-dimethyl-1,4-phenylenediamine + anthranilate + 2 NAD(+) = 2-(4-dimethylaminophenyl)diazenylbenzoate + 2 NADH + 2 H(+). Its function is as follows. Quinone reductase that provides resistance to thiol-specific stress caused by electrophilic quinones. Also exhibits azoreductase activity. Catalyzes the reductive cleavage of the azo bond in aromatic azo compounds to the corresponding amines. This is FMN-dependent NADH:quinone oxidoreductase 2 from Bacillus thuringiensis subsp. konkukian (strain 97-27).